The following is a 331-amino-acid chain: Osmotic avoidance abnormal protein 8 (331 aa).

A signal peptide spans 1-21; the sequence is MPAKMLKWLLIHIFLIHSIFC.

Expressed in the hypodermal syncitium but not in hypodermal seam cells.

The protein localises to the secreted. Negative regulator of the osmotic stress response. Acts via the transmembrane protein ptr-23. The protein is Osmotic avoidance abnormal protein 8 (osm-8) of Caenorhabditis elegans.